A 626-amino-acid chain; its full sequence is Chaperone protein DnaK (626 aa).

Thr197 bears the Phosphothreonine; by autocatalysis mark. 2 stretches are compositionally biased toward basic and acidic residues: residues 512–528 (DAEA…EAVE) and 539–551 (QTEK…GEKI). 2 disordered regions span residues 512–551 (DAEA…GEKI) and 601–626 (DQNA…AEVE).

Belongs to the heat shock protein 70 family.

Acts as a chaperone. In Campylobacter fetus subsp. fetus (strain 82-40), this protein is Chaperone protein DnaK.